The following is a 291-amino-acid chain: Transmembrane protein 41B (291 aa).

Residues 1 to 11 (MAKGRVADRSP) are compositionally biased toward basic and acidic residues. Residues 1 to 43 (MAKGRVADRSPTEMLHSTPAGDRAVRTQGSAAPGSKDHLNEKP) form a disordered region. A Phosphothreonine modification is found at Thr18. Phosphoserine is present on Ser35. The next 6 membrane-spanning stretches (helical) occupy residues 52–72 (TSLL…FLVY), 109–129 (FYVQ…TFAI), 147–169 (LALF…LSYL), 197–217 (LINY…FINI), 225–245 (PLKV…FVAI), and 262–282 (SWSS…PAIF). A VTT domain; required for its function in autophagy region spans residues 140 to 251 (GFLYPFPLAL…FVAIKAGTTL (112 aa)).

Belongs to the TMEM41 family. Interacts with VMP1. Interacts with COPA, COPB1, VDAC1 and ERLIN2. Interacts with ATG2A. Interacts with SURF4. In terms of tissue distribution, expressed in brain, spinal cord, kidney and first lumbar dorsal root ganglia during postnatal development. Expressed in motor neurons and proprioceptive neurons.

The protein resides in the endoplasmic reticulum membrane. It is found in the endomembrane system. It catalyses the reaction a 1,2-diacyl-sn-glycero-3-phospho-L-serine(in) = a 1,2-diacyl-sn-glycero-3-phospho-L-serine(out). It carries out the reaction cholesterol(in) = cholesterol(out). The enzyme catalyses a 1,2-diacyl-sn-glycero-3-phosphocholine(in) = a 1,2-diacyl-sn-glycero-3-phosphocholine(out). The catalysed reaction is a 1,2-diacyl-sn-glycero-3-phosphoethanolamine(in) = a 1,2-diacyl-sn-glycero-3-phosphoethanolamine(out). Its function is as follows. Phospholipid scramblase involved in lipid homeostasis and membrane dynamics processes. Has phospholipid scramblase activity toward cholesterol and phosphatidylserine, as well as phosphatidylethanolamine and phosphatidylcholine. Required for autophagosome formation: participates in early stages of autophagosome biogenesis at the endoplasmic reticulum (ER) membrane by reequilibrating the leaflets of the ER as lipids are extracted by ATG2 (ATG2A or ATG2B) to mediate autophagosome assembly. In addition to autophagy, involved in other processes in which phospholipid scramblase activity is required. Required for normal motor neuron development. This is Transmembrane protein 41B from Mus musculus (Mouse).